A 99-amino-acid chain; its full sequence is UPF0235 protein Cag_0319 (99 aa).

Belongs to the UPF0235 family.

The chain is UPF0235 protein Cag_0319 from Chlorobium chlorochromatii (strain CaD3).